The primary structure comprises 322 residues: MAFSKGLIFAMIFAVLAIVKPSEAALDAHYYDQSCPAAEKIILETVRNATLYDPKVPARLLRMFFHDCFIRGCDASILLDSTRSNQAEKDGPPNISVRSFYVIEDAKRKLEKACPRTVSCADVIAIAARDVVTLSGGPYWSVLKGRKDGTISRANETRNLPPPTFNVSQLIQSFAARGLSVKDMVTLSGGHTIGFSHCSSFESRLQNFSKFHDIDPSMNYAFAQTLKKKCPRTSNRGKNAGTVLDSTSSVFDNVYYKQILSGKGVFGSDQALLGDSRTKWIVETFAQDQKAFFREFAASMVKLGNFGVKETGQVRVNTRFVN.

A signal peptide spans 1–24 (MAFSKGLIFAMIFAVLAIVKPSEA). Cystine bridges form between cysteine 35/cysteine 114 and cysteine 68/cysteine 73. The Proton acceptor role is filled by histidine 66. Residues aspartate 67, glycine 72, aspartate 74, and serine 76 each contribute to the Ca(2+) site. Asparagine 155 is a glycosylation site (N-linked (GlcNAc...) asparagine). Substrate is bound at residue proline 161. Asparagine 166 carries N-linked (GlcNAc...) asparagine glycosylation. Residue histidine 191 coordinates heme b. Residue threonine 192 coordinates Ca(2+). Cysteines 198 and 230 form a disulfide. N-linked (GlcNAc...) asparagine glycosylation occurs at asparagine 207. Ca(2+) is bound by residues aspartate 245, threonine 247, and aspartate 252.

Belongs to the peroxidase family. Classical plant (class III) peroxidase subfamily. The cofactor is heme b. Requires Ca(2+) as cofactor.

It is found in the secreted. It catalyses the reaction 2 a phenolic donor + H2O2 = 2 a phenolic radical donor + 2 H2O. Functionally, removal of H(2)O(2), oxidation of toxic reductants, biosynthesis and degradation of lignin, suberization, auxin catabolism, response to environmental stresses such as wounding, pathogen attack and oxidative stress. These functions might be dependent on each isozyme/isoform in each plant tissue. This Arabidopsis thaliana (Mouse-ear cress) protein is Peroxidase 66 (PER66).